The chain runs to 256 residues: Acetyl-coenzyme A carboxylase carboxyl transferase subunit alpha (256 aa).

One can recognise a CoA carboxyltransferase C-terminal domain in the interval 1–236 (MSDVARILKE…KTAIVDELAE (236 aa)).

It belongs to the AccA family. As to quaternary structure, acetyl-CoA carboxylase is a heterohexamer composed of biotin carboxyl carrier protein (AccB), biotin carboxylase (AccC) and two subunits each of ACCase subunit alpha (AccA) and ACCase subunit beta (AccD).

Its subcellular location is the cytoplasm. The catalysed reaction is N(6)-carboxybiotinyl-L-lysyl-[protein] + acetyl-CoA = N(6)-biotinyl-L-lysyl-[protein] + malonyl-CoA. The protein operates within lipid metabolism; malonyl-CoA biosynthesis; malonyl-CoA from acetyl-CoA: step 1/1. Component of the acetyl coenzyme A carboxylase (ACC) complex. First, biotin carboxylase catalyzes the carboxylation of biotin on its carrier protein (BCCP) and then the CO(2) group is transferred by the carboxyltransferase to acetyl-CoA to form malonyl-CoA. This chain is Acetyl-coenzyme A carboxylase carboxyl transferase subunit alpha, found in Streptococcus thermophilus (strain ATCC BAA-491 / LMD-9).